The chain runs to 443 residues: Serine/threonine-protein kinase Nek2 (443 aa).

A Protein kinase domain is found at 8 to 271 (YEVLHSIGTG…VEEILESPLI (264 aa)). Residues 14-22 (IGTGSYGRC) and K37 each bind ATP. D141 (proton acceptor) is an active-site residue. At T170 the chain carries Phosphothreonine; by autocatalysis. S171 carries the phosphoserine; by autocatalysis modification. T175 and T179 each carry phosphothreonine; by autocatalysis. Residue S184 is modified to Phosphoserine. S241 bears the Phosphoserine; by autocatalysis mark. The interaction with PCNT stretch occupies residues 264-443 (EILESPLIAD…LKSRQILGMR (180 aa)). Over residues 282-292 (NLERRGRRSGE) the composition is skewed to basic and acidic residues. The tract at residues 282 to 303 (NLERRGRRSGEPSKLPDSSPVL) is disordered. S300 is modified (phosphoserine). Positions 301 to 443 (PVLSELKLKE…LKSRQILGMR (143 aa)) are interaction with CEP85. Residues 303–361 (LSELKLKERQLQDREQALRAREDILEQKERELCIRERLAEDKLARAESLMKNYSLLKEH) are a coiled coil. The leucine-zipper stretch occupies residues 306-334 (LKLKERQLQDREQALRAREDILEQKEREL). The interval 329–443 (QKERELCIRE…LKSRQILGMR (115 aa)) is necessary for interaction with MAD1L1. The interval 333–370 (ELCIRERLAEDKLARAESLMKNYSLLKEHRLLCLAGGP) is required for microtubule binding and for localization to the centrosomes. S356 bears the Phosphoserine; by STK3/MST2 mark. Residues 383–402 (VHFHGESKENTARSENSESY) form a disordered region. The segment covering 385–398 (FHGESKENTARSEN) has biased composition (basic and acidic residues). Phosphoserine is present on residues S389, S396, and S401. An interaction with SAV1 and STK3/MST2 region spans residues 402–437 (YLAKSKCRDLKKRLHAAQLRAQALADIEKNYQLKSR). A coiled-coil region spans residues 403 to 427 (LAKSKCRDLKKRLHAAQLRAQALAD). S436 is modified (phosphoserine; by STK3/MST2).

It belongs to the protein kinase superfamily. NEK Ser/Thr protein kinase family. NIMA subfamily. Forms homodimers and heterodimers. Interacts with CDC20, CTNB1, MAD1L1, MAD2L1, MAPK, NEK11, NPM1, NDC80, PCNT, PPP1CA, PPP1CC and SGO1. Interacts with STK3/MST2 (via SARAH domain) and SAV1 (via SARAH domain). Interacts with NECAB3 and HMGA2. Interacts with CEP68; the interaction leads to phosphorylation of CEP68. Interacts with CNTLN; the interaction leads to phosphorylation of CNTLN. Interacts with CEP85. It depends on Mg(2+) as a cofactor. Activated by autophosphorylation. Protein phosphatase 1 represses autophosphorylation and activation of isoform 1 by dephosphorylation. Phosphorylation by STK3/MST2 is necessary for its localization to the centrosome. Most abundantly expressed in testis. Low levels found in mid-gestation embryo, ovary, placenta, intestine, thymus and skin. Within the testis, expression restricted to germ cells with highest levels detected in spermatocytes at pachytene and diplotene stages. Also expressed in meiotic pachytene oocytes.

The protein resides in the nucleus. The protein localises to the nucleolus. It is found in the cytoplasm. It localises to the cytoskeleton. Its subcellular location is the microtubule organizing center. The protein resides in the centrosome. The protein localises to the spindle pole. It is found in the chromosome. It localises to the centromere. Its subcellular location is the kinetochore. It carries out the reaction L-seryl-[protein] + ATP = O-phospho-L-seryl-[protein] + ADP + H(+). The enzyme catalyses L-threonyl-[protein] + ATP = O-phospho-L-threonyl-[protein] + ADP + H(+). With respect to regulation, its catalytic activity is inhibited by the inhibitor CCT241950. In the presence of this inhibitor, displays an autoinhibited conformation: Tyr-70 side chain points into the active site, interacts with the activation loop, and blocks the alphaC helix. Functionally, protein kinase which is involved in the control of centrosome separation and bipolar spindle formation in mitotic cells and chromatin condensation in meiotic cells. Regulates centrosome separation (essential for the formation of bipolar spindles and high-fidelity chromosome separation) by phosphorylating centrosomal proteins such as CROCC, CEP250 and NINL, resulting in their displacement from the centrosomes. Regulates kinetochore microtubule attachment stability in mitosis via phosphorylation of NDC80. Involved in regulation of mitotic checkpoint protein complex via phosphorylation of CDC20 and MAD2L1. Plays an active role in chromatin condensation during the first meiotic division through phosphorylation of HMGA2. Phosphorylates: PPP1CC; SGO1; NECAB3 and NPM1. Essential for localization of MAD2L1 to kinetochore and MAPK1 and NPM1 to the centrosome. Phosphorylates CEP68 and CNTLN directly or indirectly. NEK2-mediated phosphorylation of CEP68 promotes CEP68 dissociation from the centrosome and its degradation at the onset of mitosis. Phosphorylates and activates NEK11 in G1/S-arrested cells. Involved in the regulation of centrosome disjunction. The protein is Serine/threonine-protein kinase Nek2 (Nek2) of Mus musculus (Mouse).